We begin with the raw amino-acid sequence, 609 residues long: MAAVAAGGLVGKGRDISLAALQRHDPYINRIVDVASQVALYTFGHRANEWEKTDVEGTLFVYTRSASPKHGFTIMNRLSMENRTEPITKDLDFQLQDPFLLYRNARLSIYGIWFYDKEECQRIAELMKNLTQYEQLKAHQGTGAGISPMILNSGEGKEVDILRMLIKAKDEYTKCKTCSEPKKITSSSAIYDNPNLIKPIPVKPSENQQQRIPQPNQTLDPEPQHLSLTALFGKQDKATCQETVEPPQTLHQQQQQQQEKLPIRQGVVRSLSYEEPRRHSPPIEKQLCPAIQKLMVRSADLHPLSELPENRPCENGSTHSAGEFFTGPVRPGSPHNIGTSRGVQNASRTQNLFEKLQSTPGAANKCDPSTPAPASSAALNRSRAPTSVTPQAPGKGLAQPPQAYFNGSLPPQAHGREQSTLPRQTLPISGNQTGSSGVISPQELLKKLQIVQQEQQLHASNRPALAAKFPVLSQSSGTGKPLESWINKTSSTEQQTPLFQVISPQRIPATAAPSLLTSPMVFAQPTSVPPKERESGLLPVGGQEPPAAATSLLLPIQSPEPSMITSSPLTKLQLQEALLYLIQNDDNFLNIIYEAYLFSMTQAAMKKSM.

A2 carries the post-translational modification N-acetylalanine. S147 bears the Phosphoserine mark. Position 191 is a phosphotyrosine (Y191). 2 disordered regions span residues P201–E222 and T243–R264. Positions S205–L219 are enriched in polar residues. 2 positions are modified to phosphoserine: S272 and S333. 2 disordered regions span residues T326–N345 and T359–V438. Residues N336–N345 are compositionally biased toward polar residues. The segment covering P368 to A378 has biased composition (low complexity). T389 bears the Phosphothreonine mark. Positions Q418–V438 are enriched in polar residues. A phosphoserine mark is found at S440 and S503.

Belongs to the DCP1 family. As to quaternary structure, interacts with DCP1A.

It localises to the cytoplasm. Its subcellular location is the nucleus. It carries out the reaction a 5'-end (N(7)-methyl 5'-triphosphoguanosine)-ribonucleoside in mRNA + H2O = N(7)-methyl-GDP + a 5'-end phospho-ribonucleoside in mRNA + 2 H(+). May play a role in the degradation of mRNAs, both in normal mRNA turnover and in nonsense-mediated mRNA decay. May remove the 7-methyl guanine cap structure from mRNA molecules, yielding a 5'-phosphorylated mRNA fragment and 7m-GDP. The sequence is that of mRNA-decapping enzyme 1B (DCP1B) from Pongo abelii (Sumatran orangutan).